The sequence spans 332 residues: MSLHLSNVILHQLCKNDQDELVVKLRPASLENDASTENLVAELHRVFHSKAGKGFGSFQSDSEFQFWLQEMRKGERDFYDFSQISANRLKEELIKYPFADEGILVFAEYQSLATDYLFIGILPMNQSLKVTEGLDISATDYLDITKMDIAARIDLSSYETDKESNRYLQYIKGRVGRKVADFFLDFLQADIGLDTKQQNLVLMQAVDDFCADSKLEKQEVNEYKKQVYNYCNEQIKSGEEVQISELSGELPPSQDGTSFMDFTKEQGYELEESFPGDRSTVRKLTKYVGAGGGLNISFDSLLLGERIFYDPETDTLTIKGTPPNLKDQLSRN.

It belongs to the YejK family.

It localises to the cytoplasm. The protein localises to the nucleoid. The polypeptide is Nucleoid-associated protein VP2128 (Vibrio parahaemolyticus serotype O3:K6 (strain RIMD 2210633)).